A 579-amino-acid chain; its full sequence is Multidrug resistance-like ATP-binding protein MdlA (579 aa).

One can recognise an ABC transmembrane type-1 domain in the interval 18–303; that stretch reads YTIAIFLLIS…FAWMFNIIER (286 aa). A run of 6 helical transmembrane segments spans residues 20–40, 53–73, 134–154, 155–175, 247–267, and 281–301; these read IAIF…KLIG, KAPI…IYIL, GVLT…VMIT, QISW…AIII, IIHL…SYMI, and ILYL…FNII. In terms of domain architecture, ABC transporter spans 338 to 572; sequence VKINYFKYSK…LKQWYGKTYL (235 aa). 370–377 contributes to the ATP binding site; that stretch reads GPTGSGKS.

This sequence belongs to the ABC transporter superfamily. Drug exporter-2 (TC 3.A.1.117) family.

It localises to the cell membrane. The enzyme catalyses ATP + H2O + xenobioticSide 1 = ADP + phosphate + xenobioticSide 2.. The chain is Multidrug resistance-like ATP-binding protein MdlA (mdlA) from Buchnera aphidicola subsp. Baizongia pistaciae (strain Bp).